The following is a 454-amino-acid chain: GA-binding protein alpha chain (454 aa).

Residues 168-251 (AALEGYRKEQ…SHLELLRKYV (84 aa)) form the PNT domain. The interval 297-316 (QRAPRISGEDRSSPGNRTGN) is disordered. Ser-303 is subject to Phosphoserine. Positions 320–400 (IQLWQFLLEL…QGKRFVYKFV (81 aa)) form a DNA-binding region, ETS.

The protein belongs to the ETS family. As to quaternary structure, heterotetramer of two alpha and two beta subunits.

It is found in the nucleus. Functionally, transcription factor capable of interacting with purine rich repeats (GA repeats). Positively regulates transcription of transcriptional repressor RHIT/ZNF205. In terms of biological role, (Microbial infection) Necessary for the expression of the Adenovirus E4 gene. The protein is GA-binding protein alpha chain (GABPA) of Homo sapiens (Human).